A 196-amino-acid chain; its full sequence is UPF0134 protein MPN_501 (196 aa).

The protein belongs to the UPF0134 family.

This Mycoplasma pneumoniae (strain ATCC 29342 / M129 / Subtype 1) (Mycoplasmoides pneumoniae) protein is UPF0134 protein MPN_501.